A 332-amino-acid chain; its full sequence is DNA packaging protein (332 aa).

An ATPase region spans residues 1–207 (MDKSLFYNPQ…SERRKTRFGR (207 aa)). An ATP-binding site is contributed by 24 to 31 (GARGIGKS). The interval 233–332 (KRSKDSKFVF…YELFRKMRIQ (100 aa)) is DNA-binding.

This sequence belongs to the phi29likevirus gp16 family. Homopentamer. Interacts with the packaging RNA (pRNA). Part of a DNA-gp3-gp16 complex.

It carries out the reaction ATP + H2O = ADP + phosphate + H(+). Functionally, ATPase required for the genome encapsidation reaction. Part of the active packaging motor via the binding to the packaging RNA (pRNA), itself fixed to the head-tail connector at the unique portal vertex of the prohead. Binds and supercoils the pre-formed, unit-length DNA bound to gp3 to produce an initiation complex for DNA packaging. Provides the energy to actively pump the viral DNA into the prohead. Approximately one molecule of ATP is used in the packaging of 2 bp of viral DNA. ATP hydrolysis results in a conformational change that causes the arginine/lysine finger of one subunit to move into the active site of its neighbor, where it interacts with the negatively charged oxygens on the gamma-phosphate of ATP. After packaging, the ATPase and the pRNA are released from the prohead. The chain is DNA packaging protein (16) from Bacillus subtilis (Bacteriophage PZA).